The following is a 674-amino-acid chain: Leucine-rich repeat transmembrane protein FLRT1 (674 aa).

An N-terminal signal peptide occupies residues 1–51 (MVVAHSAATATTTPAATVTATVVMTTATMDLRDWLFLCYGLIAFLTEVIDS). At 52–552 (TTCPSVCRCD…QNAGPMAGLP (501 aa)) the chain is on the extracellular side. Disulfide bonds link cysteine 54–cysteine 60 and cysteine 58–cysteine 67. Positions 54–80 (CPSVCRCDNGFIYCNDRGLTSIPSDIP) constitute an LRRNT domain. 10 LRR repeats span residues 81–105 (DDATTLYLQNNQINNAGIPQDLKTK), 106–126 (VKVQVIYLYENDLDEFPINLP), 127–149 (RSLRELHLQDNNVRTIARDSLAR), 151–175 (PLLEKLHLDDNSVSTVSIEEDAFAD), 176–197 (SKQLKLLFLSRNHLSSIPSGLP), 198–220 (HTLEELRLDDNRISTIPLHAFKG), 222–246 (NSLRRLVLDGNLLANQRIADDTFSR), 247–269 (LQNLTELSLVRNSLAAPPLNLPS), 270–292 (AHLQKLYLQDNAISHIPYNTLAK), and 293–316 (MRELERLDLSNNNLTTLPRGLFDD). Asparagine 305 is a glycosylation site (N-linked (GlcNAc...) asparagine). One can recognise an LRRCT domain in the interval 328–379 (NPWFCGCNLMWLRDWVRARAAVVNVRGLMCQGPEKVRGMAIKDITSEMDECF). Cysteine 332 and cysteine 357 are joined by a disulfide. The 96-residue stretch at 437-532 (KTLVIQVKPL…VCAKAETADS (96 aa)) folds into the Fibronectin type-III domain. A helical membrane pass occupies residues 553 to 573 (LAGIIGGAVALVFLFLVLGAI). The Cytoplasmic portion of the chain corresponds to 574–674 (CWYVHRAGEL…GIPDVDYSYT (101 aa)). Phosphotyrosine occurs at positions 600, 633, and 671.

Interacts with FGFR1. Interacts (via extracellular domain) with ADGRL1/LPHN1 and ADGRL3 (via olfactomedin-like domain). In terms of processing, phosphorylated in response to FGFR1 signaling, but is not a direct substrate of FGFR1 or SRC. A mutant where the Tyr phosphorylation sites have been replaced by Phe displays constitutive FGFR1-dependent activation of downstream MAP kinases. N-glycosylated. Post-translationally, proteolytic cleavage in the juxtamembrane region gives rise to a soluble ectodomain. As to expression, detected in brain (at protein level).

Its subcellular location is the cell membrane. It is found in the endoplasmic reticulum membrane. It localises to the cytoplasmic vesicle membrane. The protein resides in the cytoplasm. The protein localises to the perinuclear region. Its subcellular location is the cell junction. It is found in the focal adhesion. It localises to the secreted. The protein resides in the cell projection. The protein localises to the neuron projection. In terms of biological role, plays a role in fibroblast growth factor-mediated signaling cascades that lead to the activation of MAP kinases. Promotes neurite outgrowth via FGFR1-mediated activation of downstream MAP kinases. Promotes an increase both in neurite number and in neurite length. May play a role in cell-cell adhesion and cell guidance via its interaction with ADGRL1/LPHN1 and ADGRL3. In Mus musculus (Mouse), this protein is Leucine-rich repeat transmembrane protein FLRT1.